Reading from the N-terminus, the 182-residue chain is Cytidylate kinase (182 aa).

7–15 (GPPGSGKSS) serves as a coordination point for ATP.

Belongs to the cytidylate kinase family. Type 2 subfamily.

It is found in the cytoplasm. The catalysed reaction is CMP + ATP = CDP + ADP. It carries out the reaction dCMP + ATP = dCDP + ADP. The protein is Cytidylate kinase (cmk) of Sulfolobus acidocaldarius (strain ATCC 33909 / DSM 639 / JCM 8929 / NBRC 15157 / NCIMB 11770).